The chain runs to 332 residues: MEPFKHPIAILGAGSWGTALALVLARKGQKVRLWSYESDHVDEMQAEGVNNRYLPNYPFPETLKAYCDLKASLEGVTDILIVVPSFAFHEVITRMKPLIDAKTRIAWGTKGLAKGSRLLHEVVATELGQVPMAVISGPSLATEVAANLPTAVSLASNNSQFSKDLIERLHGQRFRVYKNDDMIGVELCGSVKNILAIATGISDGLKLGSNARAALITRGLTEMGRLVSVFGGKQETLTGLAGLGDLVLTCTDNQSRNRRFGLALGEGVDKKEAQQAIGQAIEGLYNTDQVHALAQKHAIEMPLTFQVHRILHEDLDPQQAVQELLERSPKAE.

Residues serine 15, tryptophan 16, and lysine 110 each coordinate NADPH. Residues lysine 110, glycine 137, and serine 139 each contribute to the sn-glycerol 3-phosphate site. Alanine 141 provides a ligand contact to NADPH. Lysine 192, aspartate 245, serine 255, arginine 256, and asparagine 257 together coordinate sn-glycerol 3-phosphate. Lysine 192 functions as the Proton acceptor in the catalytic mechanism. Arginine 256 contributes to the NADPH binding site. Position 282 (glutamate 282) interacts with NADPH.

It belongs to the NAD-dependent glycerol-3-phosphate dehydrogenase family.

Its subcellular location is the cytoplasm. The enzyme catalyses sn-glycerol 3-phosphate + NAD(+) = dihydroxyacetone phosphate + NADH + H(+). The catalysed reaction is sn-glycerol 3-phosphate + NADP(+) = dihydroxyacetone phosphate + NADPH + H(+). It functions in the pathway membrane lipid metabolism; glycerophospholipid metabolism. Catalyzes the reduction of the glycolytic intermediate dihydroxyacetone phosphate (DHAP) to sn-glycerol 3-phosphate (G3P), the key precursor for phospholipid synthesis. This chain is Glycerol-3-phosphate dehydrogenase [NAD(P)+], found in Coxiella burnetii (strain CbuG_Q212) (Coxiella burnetii (strain Q212)).